Consider the following 862-residue polypeptide: MPAKASLEGIEQVWSRVWEQNGTYRFDRSVTRDEVYSIDTPPPTVSGALHVGHVFSYTHADAIARFQRMRGKMVFYPMGWDDNGLPTERRVQNYYGVQCDPSLPYDPGYTPPTEPPGRPQPISRRNFVELCRNLTKIDEQAFEALWRHLGLSVDWSLTYATIDDRSRAISQRAFLRNLARGEAYLADAPTLWDVSFRTAVAQAELEDRERQGHYYRLSFTSAAGDTIHVETTRPELLPACVALVAHPDDKRYQHLFGSTAVTPVFRVPVPIKAHPLAQPDKGSGIAMICTFGDLTDVLWWRELALPTRPVMGRDGRLLPEPPPGITNAEAVAAYRTLAGLTAFSAKAKMVELLRASGDLAGDPQPTAQAVKFYEKGDKPLEIVTTRQWYVRNGGRNAQLRAALIRRGRELSWSPRFMRSRYENWVEGLAGDWIISRQRFFGVPIPVWYPLDDSGEPDYERPILPDDAALPVDPSSDTPTGYHDSQRHQPGGFMADPDVMDTWATSSLTPEIAGGWTVDDDLFGRVFPMDLRPQAHEIIRTWLFATMLRSHQEFDRLPWRTALLSGWILDPDRKKMSKSKGNSVVTPMSLLAEYGSDAVRYWAVSGRPGTDTAFDTGQMKIGRRLAIKILNATKFVLRFESPTLRAPHVAHVTEPLDRSMLARLADVVAAATTGFTQYDYTRSLECTEHFFWSFCDDYLELVKERAYGNPDDPAVRSAHAALALALRTLLRLFAPMLPFVTEEAWSWWQEGSVHRASWPARQELVGDADGVDRANRIDETNGSDEAVEDLLGLASGVLAAIRRAKSEAKQSMRASVARLTLRGRASDLAAFALVSRDVRAAGVVRDVDTAEADVPLTPEITLG.

The 'HIGH' region signature appears at 43–53 (PTVSGALHVGH). The tract at residues 459 to 494 (ERPILPDDAALPVDPSSDTPTGYHDSQRHQPGGFMA) is disordered. Residues 574-578 (KMSKS) carry the 'KMSKS' region motif. Lysine 577 contacts ATP.

It belongs to the class-I aminoacyl-tRNA synthetase family. ValS type 2 subfamily. In terms of assembly, monomer.

The protein resides in the cytoplasm. It catalyses the reaction tRNA(Val) + L-valine + ATP = L-valyl-tRNA(Val) + AMP + diphosphate. In terms of biological role, catalyzes the attachment of valine to tRNA(Val). As ValRS can inadvertently accommodate and process structurally similar amino acids such as threonine, to avoid such errors, it has a 'posttransfer' editing activity that hydrolyzes mischarged Thr-tRNA(Val) in a tRNA-dependent manner. This chain is Valine--tRNA ligase, found in Salinispora arenicola (strain CNS-205).